A 261-amino-acid polypeptide reads, in one-letter code: Glucosamine-6-phosphate deaminase (261 aa).

The Proton acceptor; for enolization step role is filled by Asp-67. Asp-136 serves as the catalytic For ring-opening step. His-138 functions as the Proton acceptor; for ring-opening step in the catalytic mechanism. Glu-143 functions as the For ring-opening step in the catalytic mechanism.

This sequence belongs to the glucosamine/galactosamine-6-phosphate isomerase family. NagB subfamily.

It catalyses the reaction alpha-D-glucosamine 6-phosphate + H2O = beta-D-fructose 6-phosphate + NH4(+). The protein operates within amino-sugar metabolism; N-acetylneuraminate degradation; D-fructose 6-phosphate from N-acetylneuraminate: step 5/5. Its function is as follows. Catalyzes the reversible isomerization-deamination of glucosamine 6-phosphate (GlcN6P) to form fructose 6-phosphate (Fru6P) and ammonium ion. In Beutenbergia cavernae (strain ATCC BAA-8 / DSM 12333 / CCUG 43141 / JCM 11478 / NBRC 16432 / NCIMB 13614 / HKI 0122), this protein is Glucosamine-6-phosphate deaminase.